Reading from the N-terminus, the 495-residue chain is Lysine--tRNA ligase (495 aa).

Residues glutamate 406 and glutamate 413 each coordinate Mg(2+).

This sequence belongs to the class-II aminoacyl-tRNA synthetase family. As to quaternary structure, homodimer. Mg(2+) serves as cofactor.

It is found in the cytoplasm. It carries out the reaction tRNA(Lys) + L-lysine + ATP = L-lysyl-tRNA(Lys) + AMP + diphosphate. The polypeptide is Lysine--tRNA ligase (Staphylococcus aureus (strain COL)).